The following is a 338-amino-acid chain: Phenylalanine--tRNA ligase alpha subunit (338 aa).

Glu253 is a Mg(2+) binding site.

It belongs to the class-II aminoacyl-tRNA synthetase family. Phe-tRNA synthetase alpha subunit type 1 subfamily. Tetramer of two alpha and two beta subunits. Requires Mg(2+) as cofactor.

It is found in the cytoplasm. The catalysed reaction is tRNA(Phe) + L-phenylalanine + ATP = L-phenylalanyl-tRNA(Phe) + AMP + diphosphate + H(+). The protein is Phenylalanine--tRNA ligase alpha subunit of Geobacter metallireducens (strain ATCC 53774 / DSM 7210 / GS-15).